Here is a 264-residue protein sequence, read N- to C-terminus: Glyceraldehyde-3-phosphate dehydrogenase (264 aa).

Residues R45 and T93 each contribute to the NAD(+) site. D-glyceraldehyde 3-phosphate is bound by residues 123–125 and T154; that span reads SCT. C124 serves as the catalytic Nucleophile. NAD(+) is bound at residue N155. D-glyceraldehyde 3-phosphate contacts are provided by residues R169, 182-183, and R205; that span reads TG. A disordered region spans residues 245 to 264; that stretch reads GILGYTEDPXVSSDXKGNSH.

The protein belongs to the glyceraldehyde-3-phosphate dehydrogenase family. Homotetramer.

It localises to the cytoplasm. It carries out the reaction D-glyceraldehyde 3-phosphate + phosphate + NAD(+) = (2R)-3-phospho-glyceroyl phosphate + NADH + H(+). The protein operates within carbohydrate degradation; glycolysis; pyruvate from D-glyceraldehyde 3-phosphate: step 1/5. Functionally, catalyzes the oxidative phosphorylation of glyceraldehyde 3-phosphate (G3P) to 1,3-bisphosphoglycerate (BPG) using the cofactor NAD. The first reaction step involves the formation of a hemiacetal intermediate between G3P and a cysteine residue, and this hemiacetal intermediate is then oxidized to a thioester, with concomitant reduction of NAD to NADH. The reduced NADH is then exchanged with the second NAD, and the thioester is attacked by a nucleophilic inorganic phosphate to produce BPG. This chain is Glyceraldehyde-3-phosphate dehydrogenase (gap), found in Borrelia hermsii.